The sequence spans 252 residues: Type II secretion system protein N (252 aa).

The Cytoplasmic portion of the chain corresponds to 1–4 (MKQK). Residues 5–25 (VLIAALFLVAYLGFLLVKLPA) form a helical membrane-spanning segment. Residues 26-252 (TLVVRHLPLP…RFPLRYQGRI (227 aa)) are Periplasmic-facing.

It belongs to the GSP N family.

It is found in the cell inner membrane. Its function is as follows. Involved in a type II secretion system (T2SS, formerly general secretion pathway, GSP) for the export of proteins. This Aeromonas hydrophila protein is Type II secretion system protein N (exeN).